The sequence spans 234 residues: Sugar fermentation stimulation protein homolog (234 aa).

This sequence belongs to the SfsA family.

This chain is Sugar fermentation stimulation protein homolog, found in Shewanella baltica (strain OS155 / ATCC BAA-1091).